The following is a 233-amino-acid chain: 2-C-methyl-D-erythritol 4-phosphate cytidylyltransferase (233 aa).

Belongs to the IspD/TarI cytidylyltransferase family. IspD subfamily.

The catalysed reaction is 2-C-methyl-D-erythritol 4-phosphate + CTP + H(+) = 4-CDP-2-C-methyl-D-erythritol + diphosphate. Its pathway is isoprenoid biosynthesis; isopentenyl diphosphate biosynthesis via DXP pathway; isopentenyl diphosphate from 1-deoxy-D-xylulose 5-phosphate: step 2/6. Its function is as follows. Catalyzes the formation of 4-diphosphocytidyl-2-C-methyl-D-erythritol from CTP and 2-C-methyl-D-erythritol 4-phosphate (MEP). This Geotalea uraniireducens (strain Rf4) (Geobacter uraniireducens) protein is 2-C-methyl-D-erythritol 4-phosphate cytidylyltransferase.